A 908-amino-acid polypeptide reads, in one-letter code: Flap endonuclease GEN homolog 1 (908 aa).

Residues 2-96 are XPG-N domain; the sequence is GVNDLWQILE…SKRNQSRYGS (95 aa). D30, E75, E134, E136, D155, D157, and D208 together coordinate Mg(2+). Residues 122-208 form an XPG-I domain region; sequence ECLGIPWVQA…VGLAILLGCD (87 aa). Residues 208 to 384 are 5'-3' exonuclease domain; the sequence is DYLPKGVPGV…LLVLLTHYDM (177 aa). Positions 390 to 464 are chromodomain; that stretch reads GSRNSNQLQP…VYQKQKLEIK (75 aa). A phosphoserine mark is found at S801 and S802.

The protein belongs to the XPG/RAD2 endonuclease family. GEN subfamily. In terms of assembly, largely monomeric, dimerizes on the Holliday junction and the first nick occurs upon dimerization at the junction. It depends on Mg(2+) as a cofactor.

It localises to the nucleus. Its function is as follows. Endonuclease which resolves Holliday junctions (HJs) by the introduction of symmetrically related cuts across the junction point, to produce nicked duplex products in which the nicks can be readily ligated. Four-way DNA intermediates, also known as Holliday junctions, are formed during homologous recombination and DNA repair, and their resolution is necessary for proper chromosome segregation. Cleaves HJs by a nick and counter-nick mechanism involving dual coordinated incisions that lead to the formation of ligatable nicked duplex products. Cleavage of the first strand is rate limiting, while second strand cleavage is rapid. Largely monomeric, dimerizes on the HJ and the first nick occurs upon dimerization at the junction. Efficiently cleaves both single and double HJs contained within large recombination intermediates. Exhibits a weak sequence preference for incision between two G residues that reside in a T-rich region of DNA. Also has endonuclease activity on 5'-flap and replication fork (RF) DNA substrates. This is Flap endonuclease GEN homolog 1 (GEN1) from Homo sapiens (Human).